The primary structure comprises 170 residues: Der GTPase-activating protein YihI (170 aa).

2 disordered regions span residues 1 to 96 and 145 to 170; these read MKKP…LSPQ and LSYDDEEDEEEDEKQEDMMRLLRGGN. Over residues 20 to 30 the composition is skewed to basic and acidic residues; it reads TREELNQEARD. Residues 31–40 are compositionally biased toward basic residues; the sequence is RKRLKKHRGH. The span at 147-159 shows a compositional bias: acidic residues; that stretch reads YDDEEDEEEDEKQ.

This sequence belongs to the YihI family. Interacts with Der.

In terms of biological role, a GTPase-activating protein (GAP) that modifies Der/EngA GTPase function. May play a role in ribosome biogenesis. This Salmonella arizonae (strain ATCC BAA-731 / CDC346-86 / RSK2980) protein is Der GTPase-activating protein YihI.